Consider the following 230-residue polypeptide: MTTAHRPTFHPARGGTARGEGDLSKLSNQYSSKDMPSHTKMKYRQTGQETEADLRKKDLRRELEDKERNAIREKRARDSASSSSSHSKRQRMDQIAAESAASVDADEAVDELNSSDDDDSDEDDTAALMAELEKIKKERAEEKAARDEEIKEKEEKQRMENILAGNPLLNDTPAGSSTSGGDFTVKRRWDDDVVFKNCAKGVEERKKEVTFINDAIRSEFHKKFMDKYIK.

Disordered stretches follow at residues 1-157 (MTTA…EEKQ) and 164-183 (AGNPLLNDTPAGSSTSGGDF). Positions 25–34 (KLSNQYSSKD) are enriched in polar residues. Coiled coils occupy residues 47 to 82 (GQETEADLRKKDLRRELEDKERNAIREKRARDSASS) and 119 to 164 (DSDE…NILA). A compositionally biased stretch (basic and acidic residues) spans 52–78 (ADLRKKDLRRELEDKERNAIREKRARD). Over residues 104-125 (DADEAVDELNSSDDDDSDEDDT) the composition is skewed to acidic residues. Residues 131-157 (ELEKIKKERAEEKAARDEEIKEKEEKQ) show a composition bias toward basic and acidic residues.

This sequence belongs to the CWC15 family. Component of spliceosomal complex.

The protein resides in the nucleus. Its function is as follows. Component of a spliceosomal complex that is required for activating pre-mRNA splicing. The polypeptide is Spliceosome-associated protein CWC15 homolog (Caenorhabditis elegans).